The sequence spans 657 residues: Bifunctional lysine-specific demethylase and histidyl-hydroxylase NO66 (657 aa).

2 disordered regions span residues 1–141 and 165–198; these read MQKA…QTSP and KSCP…NSNE. Positions 32-41 are enriched in polar residues; sequence SAKTVDTVTD. The span at 55 to 71 shows a compositional bias: basic and acidic residues; the sequence is AEKERRKYLQARVRAEG. Polar residues-rich tracts occupy residues 73–84 and 132–141; these read SASTSSKSNATR and RSQGLEQTSP. Ser133 is subject to Phosphoserine. A Phosphothreonine modification is found at Thr139. Ser140 is modified (phosphoserine). The 140-residue stretch at 315–454 folds into the JmjC domain; it reads NPSTYLLGLR…NLLETLMPIV (140 aa). 3 residues coordinate Fe cation: His355, Asp357, and His420.

The protein belongs to the ROX family. NO66 subfamily. The cofactor is Fe(2+).

The protein localises to the nucleus. The enzyme catalyses N(6),N(6)-dimethyl-L-lysyl(36)-[histone H3] + 2 2-oxoglutarate + 2 O2 = L-lysyl(36)-[histone H3] + 2 formaldehyde + 2 succinate + 2 CO2. In terms of biological role, oxygenase that can act as both a histone lysine demethylase and a ribosomal histidine hydroxylase. Specifically demethylates 'Lys-4' (H3K4me) and 'Lys-36' (H3K36me) of histone H3, thereby playing a central role in histone code. In Drosophila erecta (Fruit fly), this protein is Bifunctional lysine-specific demethylase and histidyl-hydroxylase NO66.